Reading from the N-terminus, the 428-residue chain is Dihydroorotase (428 aa).

Residues histidine 59 and histidine 61 each contribute to the Zn(2+) site. Residues 61–63 (HLR) and asparagine 93 contribute to the substrate site. Aspartate 151, histidine 178, and histidine 231 together coordinate Zn(2+). Asparagine 277 contacts substrate. Aspartate 304 is a binding site for Zn(2+). Aspartate 304 is a catalytic residue. Residues histidine 308 and 322 to 323 (FG) each bind substrate.

This sequence belongs to the metallo-dependent hydrolases superfamily. DHOase family. Class I DHOase subfamily. Zn(2+) is required as a cofactor.

It catalyses the reaction (S)-dihydroorotate + H2O = N-carbamoyl-L-aspartate + H(+). Its pathway is pyrimidine metabolism; UMP biosynthesis via de novo pathway; (S)-dihydroorotate from bicarbonate: step 3/3. Its function is as follows. Catalyzes the reversible cyclization of carbamoyl aspartate to dihydroorotate. This Bacillus pumilus (strain SAFR-032) protein is Dihydroorotase.